A 122-amino-acid polypeptide reads, in one-letter code: Large ribosomal subunit protein bL12 (122 aa).

This sequence belongs to the bacterial ribosomal protein bL12 family. As to quaternary structure, homodimer. Part of the ribosomal stalk of the 50S ribosomal subunit. Forms a multimeric L10(L12)X complex, where L10 forms an elongated spine to which 2 to 4 L12 dimers bind in a sequential fashion. Binds GTP-bound translation factors.

Its function is as follows. Forms part of the ribosomal stalk which helps the ribosome interact with GTP-bound translation factors. Is thus essential for accurate translation. The protein is Large ribosomal subunit protein bL12 of Shewanella loihica (strain ATCC BAA-1088 / PV-4).